Here is a 384-residue protein sequence, read N- to C-terminus: Putative glycosyltransferase EpsF (384 aa).

Belongs to the glycosyltransferase group 1 family. Glycosyltransferase 4 subfamily.

May be involved in the production of the exopolysaccharide (EPS) component of the extracellular matrix during biofilm formation. EPS is responsible for the adhesion of chains of cells into bundles. Required for biofilm maintenance. This Bacillus subtilis (strain 168) protein is Putative glycosyltransferase EpsF (epsF).